The primary structure comprises 751 residues: Ribosome biogenesis protein ERB1 (751 aa).

Disordered regions lie at residues 1-140 (MALT…GNVP) and 289-336 (SEPS…DPED). 2 stretches are compositionally biased toward acidic residues: residues 34-92 (LTDE…SDSD) and 119-129 (IEPDYDSDSST). Over residues 294–305 (SQPPPLPAPKRP) the composition is skewed to pro residues. The span at 323–336 (EEEKQEWLKQDPED) shows a compositional bias: basic and acidic residues. WD repeat units follow at residues 410 to 449 (HPKG…EIRR), 536 to 580 (PSSG…APFK), 582 to 621 (IKGA…KTLQ), 622 to 661 (PGIR…KPYK), 665 to 704 (YHSR…DLMT), and 720 to 751 (TDGL…VWCS).

The protein belongs to the WD repeat BOP1/ERB1 family. In terms of assembly, component of the NOP7 complex, composed of ERB1, NOP7 and YTM1. The complex is held together by ERB1, which interacts with NOP7 via its N-terminal domain and with YTM1 via a high-affinity interaction between the seven-bladed beta-propeller domains of the 2 proteins. The NOP7 complex associates with the 66S pre-ribosome.

Its subcellular location is the nucleus. The protein resides in the nucleolus. It is found in the nucleoplasm. In terms of biological role, component of the NOP7 complex, which is required for maturation of the 25S and 5.8S ribosomal RNAs and formation of the 60S ribosome. This chain is Ribosome biogenesis protein ERB1, found in Coprinopsis cinerea (strain Okayama-7 / 130 / ATCC MYA-4618 / FGSC 9003) (Inky cap fungus).